A 226-amino-acid polypeptide reads, in one-letter code: Ribose-5-phosphate isomerase A (226 aa).

Residues 25–28, 81–84, and 94–97 each bind substrate; these read TGST, DGAD, and KGGG. Catalysis depends on Glu103, which acts as the Proton acceptor. Residue Lys121 participates in substrate binding.

This sequence belongs to the ribose 5-phosphate isomerase family. As to quaternary structure, homodimer.

It catalyses the reaction aldehydo-D-ribose 5-phosphate = D-ribulose 5-phosphate. The protein operates within carbohydrate degradation; pentose phosphate pathway; D-ribose 5-phosphate from D-ribulose 5-phosphate (non-oxidative stage): step 1/1. Its function is as follows. Catalyzes the reversible conversion of ribose-5-phosphate to ribulose 5-phosphate. In Enterococcus faecalis (strain ATCC 700802 / V583), this protein is Ribose-5-phosphate isomerase A.